The chain runs to 686 residues: Delta-like protein 4 (686 aa).

The N-terminal stretch at methionine 1 to glycine 27 is a signal peptide. Residues serine 28–tryptophan 530 are Extracellular-facing. Intrachain disulfides connect cysteine 51/cysteine 55 and cysteine 62/cysteine 75. N-linked (GlcNAc...) asparagine glycans are attached at residues asparagine 79, asparagine 109, and asparagine 162. Positions valine 174 to cysteine 218 constitute a DSL domain. A disulfide bond links cysteine 176 and cysteine 185. Interaction with Notch1 regions lie at residues serine 186–leucine 188 and arginine 192–phenylalanine 196. Cystine bridges form between cysteine 189–cysteine 201, cysteine 209–cysteine 218, cysteine 223–cysteine 234, cysteine 227–cysteine 240, cysteine 242–cysteine 251, cysteine 254–cysteine 265, cysteine 260–cysteine 271, cysteine 273–cysteine 282, cysteine 289–cysteine 301, cysteine 295–cysteine 311, cysteine 313–cysteine 322, cysteine 329–cysteine 340, cysteine 334–cysteine 349, cysteine 351–cysteine 360, cysteine 367–cysteine 378, cysteine 372–cysteine 389, cysteine 391–cysteine 400, cysteine 407–cysteine 418, cysteine 412–cysteine 427, cysteine 429–cysteine 438, cysteine 445–cysteine 456, cysteine 450–cysteine 465, cysteine 467–cysteine 476, cysteine 485–cysteine 496, cysteine 490–cysteine 507, and cysteine 509–cysteine 518. EGF-like domains follow at residues aspartate 219–asparagine 252, proline 256–aspartate 283, aspartate 285–glutamate 323, glutamate 325–glutamate 361, serine 363–glutamate 401, lysine 403–glutamate 439, histidine 441–glutamate 477, and threonine 481–glutamate 519. Residues valine 531–valine 551 traverse the membrane as a helical segment. Topologically, residues alanine 552–valine 686 are cytoplasmic.

In terms of assembly, interacts with NOTCH4. Interacts (via N-terminal DSL and MNNL domains) with NOTCH1 (via EGF-like domains).

The protein resides in the cell membrane. In terms of biological role, involved in the Notch signaling pathway as Notch ligand. Activates NOTCH1 and NOTCH4. Involved in angiogenesis; negatively regulates endothelial cell proliferation and migration and angiogenic sprouting. Essential for retinal progenitor proliferation. Required for suppressing rod fates in late retinal progenitors as well as for proper generation of other retinal cell types. During spinal cord neurogenesis, inhibits V2a interneuron fate. This Rattus norvegicus (Rat) protein is Delta-like protein 4.